The chain runs to 458 residues: Argininosuccinate lyase (458 aa).

This sequence belongs to the lyase 1 family. Argininosuccinate lyase subfamily.

The protein localises to the cytoplasm. It carries out the reaction 2-(N(omega)-L-arginino)succinate = fumarate + L-arginine. Its pathway is amino-acid biosynthesis; L-arginine biosynthesis; L-arginine from L-ornithine and carbamoyl phosphate: step 3/3. In Salmonella paratyphi B (strain ATCC BAA-1250 / SPB7), this protein is Argininosuccinate lyase.